The chain runs to 94 residues: 2S albumin-like cysteine protease inhibitor (94 aa).

Disulfide bonds link Cys12/Cys35, Cys36/Cys82, and Cys48/Cys89.

It belongs to the 2S seed storage albumins family. As to expression, expressed in seeds (at protein level).

Cysteine protease inhibitor that likely functions in defense against insects by inhibiting cysteine proteases in the midgut of herbivore insects such as C.maculatus. Selectively inhibits cathepsin L, as well as papain, ficin and bromelain with lower efficiency. Shows antitumor activity, inhibiting the growth of prostate cancer cell lines PC3 and DU145, and the gastric cancer cell line Hs746T. No activity against cathepsin B or serine proteases (trypsin, human plasma kallikrein and elastase). This Araucaria angustifolia (Brazilian pine tree) protein is 2S albumin-like cysteine protease inhibitor.